The chain runs to 130 residues: Methylglyoxal synthase (130 aa).

The MGS-like domain occupies 1-130 (MSKPRIALIA…DLARTMQDVC (130 aa)). Residues H11, K15, 37-40 (TGTT), and 57-58 (SG) contribute to the substrate site. D63 (proton donor/acceptor) is an active-site residue. Residue H90 coordinates substrate.

Belongs to the methylglyoxal synthase family.

It carries out the reaction dihydroxyacetone phosphate = methylglyoxal + phosphate. Catalyzes the formation of methylglyoxal from dihydroxyacetone phosphate. This chain is Methylglyoxal synthase, found in Burkholderia multivorans (strain ATCC 17616 / 249).